A 208-amino-acid polypeptide reads, in one-letter code: Protein-L-isoaspartate O-methyltransferase (208 aa).

Residue Ser-59 is part of the active site.

It belongs to the methyltransferase superfamily. L-isoaspartyl/D-aspartyl protein methyltransferase family.

The protein resides in the cytoplasm. It catalyses the reaction [protein]-L-isoaspartate + S-adenosyl-L-methionine = [protein]-L-isoaspartate alpha-methyl ester + S-adenosyl-L-homocysteine. Functionally, catalyzes the methyl esterification of L-isoaspartyl residues in peptides and proteins that result from spontaneous decomposition of normal L-aspartyl and L-asparaginyl residues. It plays a role in the repair and/or degradation of damaged proteins. The protein is Protein-L-isoaspartate O-methyltransferase of Vibrio campbellii (strain ATCC BAA-1116).